A 114-amino-acid polypeptide reads, in one-letter code: Large ribosomal subunit protein P2 (114 aa).

Over residues 76–91 the composition is skewed to low complexity; the sequence is PAAAAAAGGGDSSSAA. The segment at 76-114 is disordered; that stretch reads PAAAAAAGGGDSSSAAKETKKEEPEEEEEDGDMGLSLFD.

This sequence belongs to the eukaryotic ribosomal protein P1/P2 family. P1 and P2 exist as dimers at the large ribosomal subunit. Post-translationally, phosphorylated.

Its function is as follows. Plays an important role in the elongation step of protein synthesis. The protein is Large ribosomal subunit protein P2 of Eimeria tenella (Coccidian parasite).